Here is a 419-residue protein sequence, read N- to C-terminus: Tyrosine--tRNA ligase (419 aa).

Y34 provides a ligand contact to L-tyrosine. The 'HIGH' region signature appears at 39-48 (PSGDSMHIGH). L-tyrosine contacts are provided by Y168 and Q172. The 'KMSKS' region motif lies at 230 to 234 (KFGKS). ATP is bound at residue K233. The S4 RNA-binding domain maps to 352 to 418 (VNLVDWLVTL…GKKKYFLVSY (67 aa)).

This sequence belongs to the class-I aminoacyl-tRNA synthetase family. TyrS type 1 subfamily. Homodimer.

The protein localises to the cytoplasm. The catalysed reaction is tRNA(Tyr) + L-tyrosine + ATP = L-tyrosyl-tRNA(Tyr) + AMP + diphosphate + H(+). In terms of biological role, catalyzes the attachment of tyrosine to tRNA(Tyr) in a two-step reaction: tyrosine is first activated by ATP to form Tyr-AMP and then transferred to the acceptor end of tRNA(Tyr). The sequence is that of Tyrosine--tRNA ligase from Listeria innocua serovar 6a (strain ATCC BAA-680 / CLIP 11262).